A 525-amino-acid polypeptide reads, in one-letter code: COP9 signalosome complex subunit 1b (525 aa).

Residues 298–460 form the PCI domain; that stretch reads HFLNANFDHC…KILFAKEADQ (163 aa).

Belongs to the CSN1 family. In terms of assembly, component of the CSN complex, probably composed of CSN1b, alien/CSN2, CSN3, CSN4, CSN5, CSN6, CSN7 and CSN8.

It is found in the cytoplasm. Its subcellular location is the nucleus. In terms of biological role, essential component of the COP9 signalosome complex (CSN), a complex involved in various cellular and developmental processes. The CSN complex is an essential regulator of the ubiquitin (Ubl) conjugation pathway by mediating the deneddylation of the cullin subunits of the SCF-type E3 ligase complexes, leading to decrease the Ubl ligase activity of SCF. The CSN complex plays an essential role in oogenesis and embryogenesis and is required for proper photoreceptor R cell differentiation and promote lamina glial cell migration or axon targeting. It also promotes Ubl-dependent degradation of cyclin E (CycE) during early oogenesis. This Drosophila melanogaster (Fruit fly) protein is COP9 signalosome complex subunit 1b (CSN1b).